The sequence spans 128 residues: Large ribosomal subunit protein eL22 (128 aa).

The protein belongs to the eukaryotic ribosomal protein eL22 family. As to quaternary structure, component of the large ribosomal subunit.

It is found in the cytoplasm. Functionally, component of the large ribosomal subunit. The ribosome is a large ribonucleoprotein complex responsible for the synthesis of proteins in the cell. This chain is Large ribosomal subunit protein eL22 (rpl22), found in Xenopus tropicalis (Western clawed frog).